The sequence spans 179 residues: Pectinesterase inhibitor 5 (179 aa).

The N-terminal stretch at 1-25 (MATMLINHMLFLTSLLIVVFPVANA) is a signal peptide. Disulfide bonds link cysteine 35-cysteine 44 and cysteine 101-cysteine 141.

It belongs to the PMEI family. Expressed in seeds, buds, and mature flowers.

It localises to the secreted. The protein localises to the extracellular space. Its subcellular location is the apoplast. Pectin methylesterase (PME) inhibitor that targets PME from seeds and modulates PME activity and pectin methylesterification during seed germination. This is Pectinesterase inhibitor 5 from Arabidopsis thaliana (Mouse-ear cress).